The primary structure comprises 130 residues: Large ribosomal subunit protein bL19 (130 aa).

It belongs to the bacterial ribosomal protein bL19 family.

Functionally, this protein is located at the 30S-50S ribosomal subunit interface and may play a role in the structure and function of the aminoacyl-tRNA binding site. The protein is Large ribosomal subunit protein bL19 of Burkholderia orbicola (strain MC0-3).